A 915-amino-acid chain; its full sequence is Alanine--tRNA ligase (915 aa).

Positions 609, 613, 712, and 716 each coordinate Zn(2+).

It belongs to the class-II aminoacyl-tRNA synthetase family. The cofactor is Zn(2+).

The protein resides in the cytoplasm. It carries out the reaction tRNA(Ala) + L-alanine + ATP = L-alanyl-tRNA(Ala) + AMP + diphosphate. Functionally, catalyzes the attachment of alanine to tRNA(Ala) in a two-step reaction: alanine is first activated by ATP to form Ala-AMP and then transferred to the acceptor end of tRNA(Ala). Also edits incorrectly charged Ser-tRNA(Ala) and Gly-tRNA(Ala) via its editing domain. The sequence is that of Alanine--tRNA ligase from Methanoculleus marisnigri (strain ATCC 35101 / DSM 1498 / JR1).